Reading from the N-terminus, the 372-residue chain is Probable O-methyltransferase 2 (372 aa).

Gly216, Asp259, and Lys273 together coordinate S-adenosyl-L-methionine. The Proton acceptor role is filled by His277.

This sequence belongs to the class I-like SAM-binding methyltransferase superfamily. Cation-independent O-methyltransferase family. COMT subfamily. As to quaternary structure, homodimer. In terms of tissue distribution, expressed predominantly in root hairs.

Its function is as follows. O-methyltransferase of unknown substrate specificity. Not active on resorcinol, orcinol, guaiacol, eugenol, ferulic acid, p-coumaric acid, catechol, caffeic acid or monomethyl ethers of resorcinol or orcinol. This is Probable O-methyltransferase 2 (OMT2) from Sorghum bicolor (Sorghum).